The chain runs to 521 residues: Cytochrome b5 reductase 4 (521 aa).

Met1 bears the N-acetylmethionine mark. The span at 1–18 shows a compositional bias: polar residues; that stretch reads MLNVPSQSFPAPRSQQRV. The tract at residues 1-27 is disordered; it reads MLNVPSQSFPAPRSQQRVASGGRSKVP. A Cytochrome b5 heme-binding domain is found at 54-130; the sequence is LIEVTEEELK…LKECLVGRMA (77 aa). The heme site is built by His89 and His112. A CS domain is found at 165–256; it reads PSYPSYDWFQ…KENTSWDFLG (92 aa). One can recognise an FAD-binding FR-type domain in the interval 273-385; the sequence is LYYRKCQLIS…SSPEGNFKIS (113 aa). FAD-binding positions include 365-380 and 392-424; these read DRLQ…SPEG and DLFL…KVKL.

The protein belongs to the flavoprotein pyridine nucleotide cytochrome reductase family. FAD serves as cofactor. In terms of tissue distribution, widely expressed.

The protein localises to the endoplasmic reticulum. It catalyses the reaction 2 Fe(III)-[cytochrome b5] + NADH = 2 Fe(II)-[cytochrome b5] + NAD(+) + H(+). In terms of biological role, NADH-cytochrome b5 reductase involved in endoplasmic reticulum stress response pathway. Plays a critical role in protecting pancreatic beta-cells against oxidant stress, possibly by protecting the cell from excess buildup of reactive oxygen species (ROS). Reduces a variety of substrates in vitro, such as cytochrome c, feericyanide and methemoglobin. The protein is Cytochrome b5 reductase 4 of Homo sapiens (Human).